The primary structure comprises 253 residues: VTSITLDLVNPTAGQYSSFVDKIRNNVKDPNLKYGGTDIAVIGPPSKEKFLRINFQSSRGTVSLGLKRDNLYVVAYLAMDNTNVNRAYYFRSEITSAELTALFPEATTANQKALEYTEDYQSIEKNAQITQGDKSRKELGLGIDLLLTSMEAVNKKARVVKNEARFLLIAIQMTAEAARFRYIQNLVIKNFPNKFNSENKVIQFEVNWKKISTAIYGDAKNGVFNKDYDFGFGKVRQVKDLQMGLLMYLGKPK.

The active site involves glutamate 176.

This sequence belongs to the ribosome-inactivating protein family. Type 1 RIP subfamily.

The enzyme catalyses Endohydrolysis of the N-glycosidic bond at one specific adenosine on the 28S rRNA.. Ribosome-inactivating protein of type 1, inhibits protein synthesis in animal cells. This Saponaria officinalis (Common soapwort) protein is Ribosome-inactivating protein saporin-7 (SAP7).